A 313-amino-acid polypeptide reads, in one-letter code: Putative S-adenosyl-L-methionine-dependent methyltransferase MAP_4064c (313 aa).

S-adenosyl-L-methionine-binding positions include Asp-129 and 158–159 (DL).

This sequence belongs to the UPF0677 family.

In terms of biological role, exhibits S-adenosyl-L-methionine-dependent methyltransferase activity. In Mycolicibacterium paratuberculosis (strain ATCC BAA-968 / K-10) (Mycobacterium paratuberculosis), this protein is Putative S-adenosyl-L-methionine-dependent methyltransferase MAP_4064c.